Here is a 309-residue protein sequence, read N- to C-terminus: CDK-activating kinase assembly factor MAT1 (309 aa).

Residues 6-50 form an RING-type zinc finger; it reads CPRCKTTKYRNPSLKLMVNVCGHTLCESCVELLFVRGSGSCQECD. Residues 142–161 enclose the UIM domain; that stretch reads REQEELEEALEMEKHENEQR.

In terms of assembly, associates with CDK7 and cyclin H.

The protein resides in the nucleus. Its function is as follows. Stabilizes the cyclin H-CDK7 complex to form a functional CDK-activating kinase (CAK) enzymatic complex. The chain is CDK-activating kinase assembly factor MAT1 (mnat1) from Xenopus laevis (African clawed frog).